A 124-amino-acid chain; its full sequence is S-adenosylmethionine decarboxylase proenzyme (124 aa).

The active-site Schiff-base intermediate with substrate; via pyruvic acid is S70. S70 is modified (pyruvic acid (Ser); by autocatalysis). H75 functions as the Proton acceptor; for processing activity in the catalytic mechanism. The active-site Proton donor; for catalytic activity is the C90.

It belongs to the prokaryotic AdoMetDC family. Type 1 subfamily. In terms of assembly, heterotetramer of two alpha and two beta chains arranged as a dimer of alpha/beta heterodimers. The cofactor is pyruvate. Is synthesized initially as an inactive proenzyme. Formation of the active enzyme involves a self-maturation process in which the active site pyruvoyl group is generated from an internal serine residue via an autocatalytic post-translational modification. Two non-identical subunits are generated from the proenzyme in this reaction, and the pyruvate is formed at the N-terminus of the alpha chain, which is derived from the carboxyl end of the proenzyme. The post-translation cleavage follows an unusual pathway, termed non-hydrolytic serinolysis, in which the side chain hydroxyl group of the serine supplies its oxygen atom to form the C-terminus of the beta chain, while the remainder of the serine residue undergoes an oxidative deamination to produce ammonia and the pyruvoyl group blocking the N-terminus of the alpha chain.

The catalysed reaction is S-adenosyl-L-methionine + H(+) = S-adenosyl 3-(methylsulfanyl)propylamine + CO2. It functions in the pathway amine and polyamine biosynthesis; S-adenosylmethioninamine biosynthesis; S-adenosylmethioninamine from S-adenosyl-L-methionine: step 1/1. Catalyzes the decarboxylation of S-adenosylmethionine to S-adenosylmethioninamine (dcAdoMet), the propylamine donor required for the synthesis of the polyamines spermine and spermidine from the diamine putrescine. The polypeptide is S-adenosylmethionine decarboxylase proenzyme (Pyrobaculum neutrophilum (strain DSM 2338 / JCM 9278 / NBRC 100436 / V24Sta) (Thermoproteus neutrophilus)).